The following is a 338-amino-acid chain: Heat-inducible transcription repressor HrcA (338 aa).

The protein belongs to the HrcA family.

Functionally, negative regulator of class I heat shock genes (grpE-dnaK-dnaJ and groELS operons). Prevents heat-shock induction of these operons. This Nitrosomonas europaea (strain ATCC 19718 / CIP 103999 / KCTC 2705 / NBRC 14298) protein is Heat-inducible transcription repressor HrcA.